The primary structure comprises 458 residues: UDP-N-acetylmuramoylalanine--D-glutamate ligase (458 aa).

Residue 124–130 (GSDGKTT) participates in ATP binding.

This sequence belongs to the MurCDEF family.

The protein localises to the cytoplasm. The enzyme catalyses UDP-N-acetyl-alpha-D-muramoyl-L-alanine + D-glutamate + ATP = UDP-N-acetyl-alpha-D-muramoyl-L-alanyl-D-glutamate + ADP + phosphate + H(+). It functions in the pathway cell wall biogenesis; peptidoglycan biosynthesis. Cell wall formation. Catalyzes the addition of glutamate to the nucleotide precursor UDP-N-acetylmuramoyl-L-alanine (UMA). This chain is UDP-N-acetylmuramoylalanine--D-glutamate ligase, found in Clostridium botulinum (strain 657 / Type Ba4).